The following is a 238-amino-acid chain: Aspirochlorine biosynthesis protein N (238 aa).

It belongs to the asaB hydroxylase/desaturase family.

It participates in mycotoxin biosynthesis. Part of the gene cluster that mediates the biosynthesis of aspirochlorine (or antibiotic A30641), an unusual halogenated spiro compound with distinctive antifungal properties due to selective inhibition of protein biosynthesis, and which is also active against bacteria, viruses, and murine tumor cells. The non-ribosomal peptide synthetase (NRPS) aclP is responsible the formation of the diketopiperazine (DKP) core from the condensation of 2 phenylalanine residues. One Phe residue is tailored into chlorotyrosine by hydroxylation and chlorination, whereas the second Phe undergoes an unprecedented C-C bond cleavage to be converted into glycine. After formation of the DKP, sulfur is incorporated into the DKP by conjugation with glutathione by aclG, followed by its stepwise degradation to the thiol by aclI, aclJ and aclK, and the dithiol oxidation by aclT. In addition, oxygenases (aclB, aclC, aclL and aclO) and O-methyltransferases (aclM and aclU) act as tailoring enzymes to produce the intermediate dechloroaspirochlorine. Ultimately, chlorination of dechloroaspirochlorine by the halogenase aclH is the last step in the aspirochlorine pathway. The polypeptide is Aspirochlorine biosynthesis protein N (Aspergillus oryzae (strain ATCC 42149 / RIB 40) (Yellow koji mold)).